A 255-amino-acid polypeptide reads, in one-letter code: Large ribosomal subunit protein uL4 (255 aa).

It belongs to the universal ribosomal protein uL4 family. In terms of assembly, part of the 50S ribosomal subunit.

In terms of biological role, one of the primary rRNA binding proteins, this protein initially binds near the 5'-end of the 23S rRNA. It is important during the early stages of 50S assembly. It makes multiple contacts with different domains of the 23S rRNA in the assembled 50S subunit and ribosome. Its function is as follows. Forms part of the polypeptide exit tunnel. This chain is Large ribosomal subunit protein uL4, found in Pyrococcus furiosus (strain ATCC 43587 / DSM 3638 / JCM 8422 / Vc1).